The sequence spans 190 residues: Peptide deformylase (190 aa).

Cys-94 and His-136 together coordinate Fe cation. Residue Glu-137 is part of the active site. His-140 is a Fe cation binding site.

This sequence belongs to the polypeptide deformylase family. The cofactor is Fe(2+).

The catalysed reaction is N-terminal N-formyl-L-methionyl-[peptide] + H2O = N-terminal L-methionyl-[peptide] + formate. Removes the formyl group from the N-terminal Met of newly synthesized proteins. Requires at least a dipeptide for an efficient rate of reaction. N-terminal L-methionine is a prerequisite for activity but the enzyme has broad specificity at other positions. The protein is Peptide deformylase of Chlorobium phaeovibrioides (strain DSM 265 / 1930) (Prosthecochloris vibrioformis (strain DSM 265)).